A 310-amino-acid polypeptide reads, in one-letter code: MSQRYRGRFAPSPTGPLHLGSLVTALASWLDARAHGGDWLVRIEDIDYPRCVRDADNDILRTLDALGLHPDEPPVWQSRREGLYAEALRQLDAAGYLYPCGCTRKEIADSLVHVRERHQTLGYPGTCRNGLHGKLPRAWRVRVPDGPAATICFDDRWQGRQCQNLETELGDFVLRRADGLWAYQLAVVVDDAAQGITHIVRGADLLDSTPRQIHLEHLLGLPTPDYLHVPVVVNAVGEKLSKQSGAQALDASAPLDALRTAGTHLGIVNQETTVAAWLATATGQWLERLRAVQDLRGTPPSSAATGRLGA.

Residues Arg-8–Ser-12 and Glu-44 each bind L-glutamate. The 'HIGH' region motif lies at Pro-11–Ser-21. Zn(2+)-binding residues include Cys-100, Cys-102, Tyr-123, and Cys-127. L-glutamate is bound by residues Tyr-183 and Arg-201. Positions Lys-239–Gln-243 match the 'KMSKS' region motif. Residue Lys-242 coordinates ATP.

It belongs to the class-I aminoacyl-tRNA synthetase family. GluQ subfamily. Requires Zn(2+) as cofactor.

In terms of biological role, catalyzes the tRNA-independent activation of glutamate in presence of ATP and the subsequent transfer of glutamate onto a tRNA(Asp). Glutamate is transferred on the 2-amino-5-(4,5-dihydroxy-2-cyclopenten-1-yl) moiety of the queuosine in the wobble position of the QUC anticodon. This is Glutamyl-Q tRNA(Asp) synthetase from Cupriavidus metallidurans (strain ATCC 43123 / DSM 2839 / NBRC 102507 / CH34) (Ralstonia metallidurans).